The chain runs to 255 residues: Taurine import ATP-binding protein TauB (255 aa).

The ABC transporter domain maps to 2 to 229; sequence LQISHLYADY…RFVAGESSRS (228 aa). 34–41 contributes to the ATP binding site; sequence GPSGCGKT.

The protein belongs to the ABC transporter superfamily. Taurine importer (TC 3.A.1.17.1) family. In terms of assembly, the complex is composed of two ATP-binding proteins (TauB), two transmembrane proteins (TauC) and a solute-binding protein (TauA).

The protein localises to the cell inner membrane. It catalyses the reaction taurine(out) + ATP + H2O = taurine(in) + ADP + phosphate + H(+). Functionally, part of the ABC transporter complex TauABC involved in taurine import. Responsible for energy coupling to the transport system. This is Taurine import ATP-binding protein TauB from Shigella dysenteriae serotype 1 (strain Sd197).